Consider the following 435-residue polypeptide: Putrescine transporter PotE (435 aa).

12 helical membrane-spanning segments follow: residues 8-28 (IGVVQLTILTMVNMMGSGIIM), 39-59 (ISIVSWLVTAVGSTALAYAFA), 95-115 (LVIANTAIAISAVGYGSELFG), 117-137 (ILSPLSIALWTIFTLWLATVL), 148-168 (ISSFTIWGVIIPVVGISIIGW), 185-205 (VPTFEAIGVSISMTLWAFLGL), 224-244 (IAVLGGTLGAAVIYIVSTNVI), 275-295 (VIMGLMVMSCFGSLLGWQFTI), 320-340 (APVVGMITITALQTLLSLMTI), 354-374 (LAVVTNVIPYLLSMAALAVLL), 386-406 (TTVFVAFIGSLYSIYALYAAG), and 409-429 (AMLYGSIVTFIGWTLYGFVSY).

Belongs to the amino acid-polyamine-organocation (APC) superfamily. Basic amino acid/polyamine antiporter (APA) (TC 2.A.3.2) family.

Its subcellular location is the cell inner membrane. The catalysed reaction is putrescine(in) + H(+)(in) = putrescine(out) + H(+)(out). It catalyses the reaction putrescine(in) + L-ornithine(out) = putrescine(out) + L-ornithine(in). Functionally, catalyzes both the uptake and excretion of putrescine. The uptake of putrescine is dependent on the membrane potential and the excretion involves putrescine-ornithine antiporter activity. This Haemophilus influenzae (strain ATCC 51907 / DSM 11121 / KW20 / Rd) protein is Putrescine transporter PotE.